The following is a 352-amino-acid chain: Thiosulfate transporter TsuA (352 aa).

The helical transmembrane segment at 1 to 21 threads the bilayer; sequence MFSMILSGLICGALLGFVMQR. Residues 22–44 lie on the Cytoplasmic side of the membrane; the sequence is GRFCLTGGFRDMYIVKNNRMFYA. The helical transmembrane segment at 45-65 threads the bilayer; it reads LLIAISVQSVGVFALIQAGLL. Topologically, residues 66-70 are periplasmic; that stretch reads TYEAG. The helical transmembrane segment at 71-91 threads the bilayer; that stretch reads AFPWLGTVIGGYIFGLGIVLA. The Cytoplasmic portion of the chain corresponds to 92–102; it reads GGCATGTWYRA. Residues 103 to 123 traverse the membrane as a helical segment; it reads GEGLIGSWIALFTYMVMSAVM. Topologically, residues 124 to 148 are periplasmic; that stretch reads RSPHASGLNQTLQHYSTEHNSIAET. The chain crosses the membrane as a helical span at residues 149 to 169; it reads FNLSVWPLVAVLLVITLWVVM. Over 170–197 the chain is Cytoplasmic; it reads KELKKPKLKVATLPPRRTGIAHILFEKR. A helical transmembrane segment spans residues 198 to 218; that stretch reads WHPFVTAVLIGLIALLAWPLS. The Periplasmic segment spans residues 219-247; sequence EATGRMFGLGITSPTANILQFLVAGDMKY. Residues 248–268 traverse the membrane as a helical segment; the sequence is INWGVFLVLGIFVGSFIAAKA. Residues 269 to 289 are Cytoplasmic-facing; it reads SREFRVRAADAQTTLRSGLGG. Residues 290-310 traverse the membrane as a helical segment; sequence VLMGFGASIAGGCSIGNGLVM. At 311–317 the chain is on the periplasmic side; that stretch reads TAMMTWQ. Residues 318–338 form a helical membrane-spanning segment; that stretch reads GWIGLVFMILGVWTASWLVYV. Over 339-352 the chain is Cytoplasmic; sequence RPQRKARLATAAAN.

The protein belongs to the TsuA/YedE (TC 9.B.102) family.

The protein resides in the cell inner membrane. The catalysed reaction is thiosulfate(in) = thiosulfate(out). Functionally, mediates thiosulfate uptake. The polypeptide is Thiosulfate transporter TsuA (Escherichia coli (strain K12)).